Reading from the N-terminus, the 457-residue chain is Vasoactive intestinal polypeptide receptor (457 aa).

Positions 1–19 (MGLVEVVWWWRWRFGGGGG) are cleaved as a signal peptide. At 20–141 (GLVVEVEVWW…KEQTAFYGTV (122 aa)) the chain is on the extracellular side. 3 disulfide bridges follow: C51-C73, C64-C105, and C87-C122. N-linked (GlcNAc...) asparagine glycosylation is found at N59, N70, N100, and N104. A helical membrane pass occupies residues 142 to 166 (KTGYTIGHTLSLIALTAAMIILCLF). The Cytoplasmic portion of the chain corresponds to 167 to 173 (RKLHCTR). Residues 174–193 (NYIHMHLFMSFIMRAIAVFI) form a helical membrane-spanning segment. Topologically, residues 194–215 (KDVTLFESGEPEHCFVSSVGCK) are extracellular. C214 and C284 are joined by a disulfide. A helical transmembrane segment spans residues 216–239 (AMMVFFQYCVMANFFWLLVEGLYL). Over 240-253 (HTLLVISFFSERKY) the chain is Cytoplasmic. A helical membrane pass occupies residues 254 to 275 (FWWYILIGWGAPSVFITAWTVV). Residues 276–292 (RIYFFNVGCWEEIIESP) lie on the Extracellular side of the membrane. A helical membrane pass occupies residues 293–316 (IWWIIKTPILVSILVNFILFICII). Over 317–341 (RILVQKLHSPDVGHNETSQYSRLAK) the chain is Cytoplasmic. Residues 342–361 (STLLLIPLFGIHYIMFAFFP) traverse the membrane as a helical segment. Over 362–373 (DNFKAQVKLVFE) the chain is Extracellular. A helical membrane pass occupies residues 374 to 393 (LVVGSFQGFVVAVLYCFLNG). At 394–457 (EVQAELKRKW…SSFQAEFSLV (64 aa)) the chain is on the cytoplasmic side.

It belongs to the G-protein coupled receptor 2 family. As to expression, expressed in pituitary, hypothalamus, small intestine and ovarian follicles.

The protein resides in the cell membrane. In terms of biological role, this is a receptor for VIP. The activity of this receptor is mediated by G proteins which activate adenylyl cyclase. The polypeptide is Vasoactive intestinal polypeptide receptor (VIPR1) (Meleagris gallopavo (Wild turkey)).